Reading from the N-terminus, the 170-residue chain is Peptide deformylase (170 aa).

Fe cation-binding residues include cysteine 94 and histidine 136. The active site involves glutamate 137. Residue histidine 140 participates in Fe cation binding.

Belongs to the polypeptide deformylase family. It depends on Fe(2+) as a cofactor.

It carries out the reaction N-terminal N-formyl-L-methionyl-[peptide] + H2O = N-terminal L-methionyl-[peptide] + formate. Functionally, removes the formyl group from the N-terminal Met of newly synthesized proteins. Requires at least a dipeptide for an efficient rate of reaction. N-terminal L-methionine is a prerequisite for activity but the enzyme has broad specificity at other positions. In Agrobacterium fabrum (strain C58 / ATCC 33970) (Agrobacterium tumefaciens (strain C58)), this protein is Peptide deformylase.